The primary structure comprises 183 residues: Dual-action ribosomal maturation protein DarP (183 aa).

The segment at 1 to 20 (MKQKYEDWLNDVPDNQEDDE) is disordered.

It belongs to the DarP family.

The protein resides in the cytoplasm. Member of a network of 50S ribosomal subunit biogenesis factors which assembles along the 30S-50S interface, preventing incorrect 23S rRNA structures from forming. Promotes peptidyl transferase center (PTC) maturation. This chain is Dual-action ribosomal maturation protein DarP, found in Pectobacterium carotovorum subsp. carotovorum (strain PC1).